Here is a 345-residue protein sequence, read N- to C-terminus: Protein RecA (345 aa).

Residue 80–87 (GPESSGKT) coordinates ATP.

It belongs to the RecA family.

It is found in the cytoplasm. Its function is as follows. Can catalyze the hydrolysis of ATP in the presence of single-stranded DNA, the ATP-dependent uptake of single-stranded DNA by duplex DNA, and the ATP-dependent hybridization of homologous single-stranded DNAs. It interacts with LexA causing its activation and leading to its autocatalytic cleavage. The polypeptide is Protein RecA (Mycoplasma mycoides subsp. mycoides SC (strain CCUG 32753 / NCTC 10114 / PG1)).